The sequence spans 200 residues: Recombination protein RecR (200 aa).

The segment at 57–72 (CRQCRTLTEDDLCPQC) adopts a C4-type zinc-finger fold. A Toprim domain is found at 80–175 (TLLCVVEGPM…IASRIAHGVP (96 aa)).

This sequence belongs to the RecR family.

In terms of biological role, may play a role in DNA repair. It seems to be involved in an RecBC-independent recombinational process of DNA repair. It may act with RecF and RecO. In Pseudomonas fluorescens (strain Pf0-1), this protein is Recombination protein RecR.